A 281-amino-acid chain; its full sequence is Endonuclease III-like protein 1 (281 aa).

The transit peptide at 1–17 directs the protein to the mitochondrion; the sequence is MCAAAPRGGGRAARRLG. Positions 1 to 60 are disordered; sequence MCAAAPRGGGRAARRLGAATAGSRVPSAAPRYSRRTRRVPIAYEAEPKPESPGPKWEPEN. Positions 15–24 are enriched in low complexity; the sequence is RLGAATAGSR. The HhH domain maps to 168–192; sequence KYGGDIPGTVEELVKLPGVGPKMAH. Lys189 serves as the catalytic Nucleophile; for N-glycosylase activity. [4Fe-4S] cluster contacts are provided by Cys259, Cys266, Cys269, and Cys275.

Belongs to the Nth/MutY family. Requires [4Fe-4S] cluster as cofactor.

It localises to the nucleus. The protein resides in the mitochondrion. The catalysed reaction is 2'-deoxyribonucleotide-(2'-deoxyribose 5'-phosphate)-2'-deoxyribonucleotide-DNA = a 3'-end 2'-deoxyribonucleotide-(2,3-dehydro-2,3-deoxyribose 5'-phosphate)-DNA + a 5'-end 5'-phospho-2'-deoxyribonucleoside-DNA + H(+). Its function is as follows. Bifunctional DNA N-glycosylase with associated apurinic/apyrimidinic (AP) lyase function that catalyzes the first step in base excision repair (BER), the primary repair pathway for the repair of oxidative DNA damage. The DNA N-glycosylase activity releases the damaged DNA base from DNA by cleaving the N-glycosidic bond, leaving an AP site. The AP lyase activity cleaves the phosphodiester bond 3' to the AP site by a beta-elimination. Primarily recognizes and repairs oxidative base damage of pyrimidines. In Gallus gallus (Chicken), this protein is Endonuclease III-like protein 1.